Consider the following 40-residue polypeptide: Photosystem II reaction center protein Y (40 aa).

Residues 5–23 form a helical membrane-spanning segment; the sequence is LVLVASPILLAVGWAGFNI.

Belongs to the PsbY family. PSII is composed of 1 copy each of membrane proteins PsbA, PsbB, PsbC, PsbD, PsbE, PsbF, PsbH, PsbI, PsbJ, PsbK, PsbL, PsbM, PsbT, PsbX, PsbY, PsbZ, Psb30/Ycf12, peripheral proteins PsbO, CyanoQ (PsbQ), PsbU, PsbV and a large number of cofactors. It forms dimeric complexes.

It localises to the cellular thylakoid membrane. In terms of biological role, loosely associated component of the core of photosystem II (PSII), it is not always seen in crystals. PSII is a light-driven water plastoquinone oxidoreductase, using light energy to abstract electrons from H(2)O, generating a proton gradient subsequently used for ATP formation. This Synechococcus sp. (strain RCC307) protein is Photosystem II reaction center protein Y.